The primary structure comprises 484 residues: Aspartyl/glutamyl-tRNA(Asn/Gln) amidotransferase subunit B (484 aa).

The protein belongs to the GatB/GatE family. GatB subfamily. As to quaternary structure, heterotrimer of A, B and C subunits.

It catalyses the reaction L-glutamyl-tRNA(Gln) + L-glutamine + ATP + H2O = L-glutaminyl-tRNA(Gln) + L-glutamate + ADP + phosphate + H(+). The enzyme catalyses L-aspartyl-tRNA(Asn) + L-glutamine + ATP + H2O = L-asparaginyl-tRNA(Asn) + L-glutamate + ADP + phosphate + 2 H(+). Functionally, allows the formation of correctly charged Asn-tRNA(Asn) or Gln-tRNA(Gln) through the transamidation of misacylated Asp-tRNA(Asn) or Glu-tRNA(Gln) in organisms which lack either or both of asparaginyl-tRNA or glutaminyl-tRNA synthetases. The reaction takes place in the presence of glutamine and ATP through an activated phospho-Asp-tRNA(Asn) or phospho-Glu-tRNA(Gln). In Anaeromyxobacter dehalogenans (strain 2CP-1 / ATCC BAA-258), this protein is Aspartyl/glutamyl-tRNA(Asn/Gln) amidotransferase subunit B.